The following is an 87-amino-acid chain: Colicin-E7 immunity protein (87 aa).

This sequence belongs to the colicins ColE2/ColE8/ColE9 and pyocins S1/S2 family.

In terms of biological role, this protein is able to protect a cell, which harbors the plasmid ColE7 encoding colicin E7, against colicin E7, it binds specifically to the DNase-type colicin and inhibits its bactericidal activity. Dimeric ImmE7 may possess a RNase activity that cleaves its own mRNA at a specific site and thus autoregulates translational expression of the downstream ceiE7 gene as well as degradation of the upstream ceaE7 mRNA. This is Colicin-E7 immunity protein (imm) from Escherichia coli.